Reading from the N-terminus, the 280-residue chain is Putative pyruvate, phosphate dikinase regulatory protein 1 (280 aa).

152–159 contacts ADP; it reads GVSRTSKT.

Belongs to the pyruvate, phosphate/water dikinase regulatory protein family. PDRP subfamily.

It carries out the reaction N(tele)-phospho-L-histidyl/L-threonyl-[pyruvate, phosphate dikinase] + ADP = N(tele)-phospho-L-histidyl/O-phospho-L-threonyl-[pyruvate, phosphate dikinase] + AMP + H(+). The enzyme catalyses N(tele)-phospho-L-histidyl/O-phospho-L-threonyl-[pyruvate, phosphate dikinase] + phosphate + H(+) = N(tele)-phospho-L-histidyl/L-threonyl-[pyruvate, phosphate dikinase] + diphosphate. Bifunctional serine/threonine kinase and phosphorylase involved in the regulation of the pyruvate, phosphate dikinase (PPDK) by catalyzing its phosphorylation/dephosphorylation. In Latilactobacillus sakei subsp. sakei (strain 23K) (Lactobacillus sakei subsp. sakei), this protein is Putative pyruvate, phosphate dikinase regulatory protein 1.